Reading from the N-terminus, the 292-residue chain is Protease HtpX (292 aa).

Transmembrane regions (helical) follow at residues 5–25 and 34–54; these read IFLF…VMSV and SGLL…SLLL. Position 140 (histidine 140) interacts with Zn(2+). Glutamate 141 is an active-site residue. A Zn(2+)-binding site is contributed by histidine 144. The next 2 helical transmembrane spans lie at 155-175 and 193-213; these read LLQG…GGII and IIVF…AMWF. Glutamate 218 provides a ligand contact to Zn(2+).

The protein belongs to the peptidase M48B family. Requires Zn(2+) as cofactor.

The protein resides in the cell inner membrane. The chain is Protease HtpX from Xanthomonas oryzae pv. oryzae (strain MAFF 311018).